A 747-amino-acid polypeptide reads, in one-letter code: MFDTCGPKGVKSQVISGQRENFVRLDSMDSRYSQSSETGLNKCTLNIQGGPKRFAQGSKASSGSFKKGFRKGSEGLWSIGRSIGLGVSRAVFPEDLEVSEKKIFDPQDKFLLLCNKLFVASCILAVSVDPLFLYLPFINDKAKCVGIDRKLAIIVTTIRTVIDSFYLFHMALRFRTAYVAPSSRVFGRGELVIDPAQIAKRYLQQYFIIDLLSVLPVPQIIVWRFLYTSRGANVLATKQALRYIVLVQYIPRFLRMYPLSSELKRTAGVFAETAWAGAAYYLLLYMLASHIVGALWYLLALERNNDCWSKACHNNQNCTRNFLFCGNQNMKGYAAWDNIKVSYLQLKCPVNVPEDEEPPFDFGIYLRALSSGIVSSKNFVSKYFFCLWWGLQNLSTLGQGLETSTYPGEVIFSITLAIAGLLLFALLIGNMQTYLQSLTIRLEEMRVKRRDSEQWMHHRMLPPELRERVRRYDQYKWLETRGVDEENLVQNLPKDLRRDIKRHLCLALVRRVPLFENMDERLLDAICERLKPCLFTEKSYLVREGDPVNEMLFIIRGRLESVTTDGGRSGFYNRSLLKEGDFCGDELLTWALDPKSGSNLPSSTRTVKALTEVEAFALIADELKFVASQFRRLHSRQVQHTFRFYSQQWRTWAACFMQAAWRRYIKRKKLEQLRKEEEEEEAAAASVIAGGSPYSIRATFLASKFAANALRSVHKNRTAKSTLLLSSTKELVKFQKPPEPDFSAEDH.

Over 1–117 the chain is Cytoplasmic; it reads MFDTCGPKGV…DKFLLLCNKL (117 aa). Residues 118–138 form a helical membrane-spanning segment; sequence FVASCILAVSVDPLFLYLPFI. The Extracellular portion of the chain corresponds to 139 to 150; the sequence is NDKAKCVGIDRK. Residues 151 to 171 traverse the membrane as a helical segment; that stretch reads LAIIVTTIRTVIDSFYLFHMA. The Cytoplasmic portion of the chain corresponds to 172 to 205; the sequence is LRFRTAYVAPSSRVFGRGELVIDPAQIAKRYLQQ. A helical transmembrane segment spans residues 206 to 226; that stretch reads YFIIDLLSVLPVPQIIVWRFL. The Extracellular segment spans residues 227-239; it reads YTSRGANVLATKQ. The chain crosses the membrane as a helical span at residues 240-260; sequence ALRYIVLVQYIPRFLRMYPLS. The Cytoplasmic segment spans residues 261 to 280; sequence SELKRTAGVFAETAWAGAAY. The chain crosses the membrane as a helical span at residues 281 to 301; the sequence is YLLLYMLASHIVGALWYLLAL. The Extracellular portion of the chain corresponds to 302 to 407; it reads ERNNDCWSKA…GQGLETSTYP (106 aa). A helical transmembrane segment spans residues 408 to 428; that stretch reads GEVIFSITLAIAGLLLFALLI. The Cytoplasmic portion of the chain corresponds to 429-747; that stretch reads GNMQTYLQSL…PEPDFSAEDH (319 aa). Residues 514–638 and aspartate 585 each bind a nucleoside 3',5'-cyclic phosphate; that span reads LFEN…SRQV. Residues 630-645 are calmodulin-binding; sequence FRRLHSRQVQHTFRFY. The IQ domain occupies 650 to 679; it reads RTWAACFMQAAWRRYIKRKKLEQLRKEEEE.

It belongs to the cyclic nucleotide-gated cation channel (TC 1.A.1.5) family. In terms of assembly, homotetramer or heterotetramer.

The protein resides in the cell membrane. Its function is as follows. Probable cyclic nucleotide-gated ion channel. This Arabidopsis thaliana (Mouse-ear cress) protein is Probable cyclic nucleotide-gated ion channel 6 (CNGC6).